A 174-amino-acid polypeptide reads, in one-letter code: Translation initiation factor IF-3 (174 aa).

The protein belongs to the IF-3 family. As to quaternary structure, monomer.

Its subcellular location is the cytoplasm. Its function is as follows. IF-3 binds to the 30S ribosomal subunit and shifts the equilibrium between 70S ribosomes and their 50S and 30S subunits in favor of the free subunits, thus enhancing the availability of 30S subunits on which protein synthesis initiation begins. This is Translation initiation factor IF-3 from Helicobacter hepaticus (strain ATCC 51449 / 3B1).